Here is a 162-residue protein sequence, read N- to C-terminus: Xanthine-guanine phosphoribosyltransferase (162 aa).

Residues 41–42 (RG) and 92–100 (DDLVDTGNT) contribute to the 5-phospho-alpha-D-ribose 1-diphosphate site. Position 93 (D93) interacts with Mg(2+). Residues D96 and I139 each coordinate guanine. D96 and I139 together coordinate xanthine. Residues 96–100 (DTGNT) and 138–139 (WI) each bind GMP.

The protein belongs to the purine/pyrimidine phosphoribosyltransferase family. XGPT subfamily. In terms of assembly, homotetramer. It depends on Mg(2+) as a cofactor.

The protein resides in the cell inner membrane. The catalysed reaction is GMP + diphosphate = guanine + 5-phospho-alpha-D-ribose 1-diphosphate. The enzyme catalyses XMP + diphosphate = xanthine + 5-phospho-alpha-D-ribose 1-diphosphate. It catalyses the reaction IMP + diphosphate = hypoxanthine + 5-phospho-alpha-D-ribose 1-diphosphate. The protein operates within purine metabolism; GMP biosynthesis via salvage pathway; GMP from guanine: step 1/1. Its pathway is purine metabolism; XMP biosynthesis via salvage pathway; XMP from xanthine: step 1/1. Purine salvage pathway enzyme that catalyzes the transfer of the ribosyl-5-phosphate group from 5-phospho-alpha-D-ribose 1-diphosphate (PRPP) to the N9 position of the 6-oxopurines guanine and xanthine to form the corresponding ribonucleotides GMP (guanosine 5'-monophosphate) and XMP (xanthosine 5'-monophosphate), with the release of PPi. To a lesser extent, also acts on hypoxanthine. The protein is Xanthine-guanine phosphoribosyltransferase of Chromohalobacter salexigens (strain ATCC BAA-138 / DSM 3043 / CIP 106854 / NCIMB 13768 / 1H11).